We begin with the raw amino-acid sequence, 376 residues long: MENILLNKALLILEDGTKFYGNSIGAKGTSIGEVIFNTSITGYQEIITDPSYFNQIVAFTYPHIGNIGIEINNNESSKIQVKAVILYQTHNIISDFRNKLSFSRFLLLNNIIGISGIDTRKLTRLIRKSGTQYGYVSSEGTNINFKEIKSKIKIFLEKKNLDLVKLVTTKRKIIYKKKYIEKNFFYNIVAYDFGIKFSIIKNLINLGCRITLVPATTKSKYVISLNPDGILLSNGPGNPEIYKYAIRNIQCLLETKIPIFGICLGHQLLAIANGAKILKMKFGHHGSNHPVKDLETNKIIITSQNHDFAIDKSTLSKNIIITHISMFDQTLQGIKLINKPVFSFQGHPESSPGPKDALFLFKNFINLVKDYRLNKK.

Positions 1–183 (MENILLNKAL…IYKKKYIEKN (183 aa)) are CPSase. Ser-51, Gly-235, and Gly-237 together coordinate L-glutamine. One can recognise a Glutamine amidotransferase type-1 domain in the interval 187-374 (NIVAYDFGIK…INLVKDYRLN (188 aa)). The Nucleophile role is filled by Cys-263. The L-glutamine site is built by Leu-264, Gln-267, Asn-305, and Phe-308. Catalysis depends on residues His-347 and Glu-349.

The protein belongs to the CarA family. In terms of assembly, composed of two chains; the small (or glutamine) chain promotes the hydrolysis of glutamine to ammonia, which is used by the large (or ammonia) chain to synthesize carbamoyl phosphate. Tetramer of heterodimers (alpha,beta)4.

It catalyses the reaction hydrogencarbonate + L-glutamine + 2 ATP + H2O = carbamoyl phosphate + L-glutamate + 2 ADP + phosphate + 2 H(+). The catalysed reaction is L-glutamine + H2O = L-glutamate + NH4(+). It functions in the pathway amino-acid biosynthesis; L-arginine biosynthesis; carbamoyl phosphate from bicarbonate: step 1/1. It participates in pyrimidine metabolism; UMP biosynthesis via de novo pathway; (S)-dihydroorotate from bicarbonate: step 1/3. In terms of biological role, small subunit of the glutamine-dependent carbamoyl phosphate synthetase (CPSase). CPSase catalyzes the formation of carbamoyl phosphate from the ammonia moiety of glutamine, carbonate, and phosphate donated by ATP, constituting the first step of 2 biosynthetic pathways, one leading to arginine and/or urea and the other to pyrimidine nucleotides. The small subunit (glutamine amidotransferase) binds and cleaves glutamine to supply the large subunit with the substrate ammonia. The protein is Carbamoyl phosphate synthase small chain of Wigglesworthia glossinidia brevipalpis.